The following is a 410-amino-acid chain: LL-diaminopimelate aminotransferase (410 aa).

Substrate is bound by residues Tyr-15 and Gly-42. Pyridoxal 5'-phosphate is bound by residues Tyr-72, 108–109 (AK), Tyr-132, Asn-187, Tyr-218, and 246–248 (SFS). 3 residues coordinate substrate: Lys-109, Tyr-132, and Asn-187. Lys-249 carries the N6-(pyridoxal phosphate)lysine modification. Pyridoxal 5'-phosphate contacts are provided by Arg-257 and Asn-292. Positions 292 and 388 each coordinate substrate.

It belongs to the class-I pyridoxal-phosphate-dependent aminotransferase family. LL-diaminopimelate aminotransferase subfamily. Homodimer. The cofactor is pyridoxal 5'-phosphate.

The enzyme catalyses (2S,6S)-2,6-diaminopimelate + 2-oxoglutarate = (S)-2,3,4,5-tetrahydrodipicolinate + L-glutamate + H2O + H(+). It functions in the pathway amino-acid biosynthesis; L-lysine biosynthesis via DAP pathway; LL-2,6-diaminopimelate from (S)-tetrahydrodipicolinate (aminotransferase route): step 1/1. Functionally, involved in the synthesis of meso-diaminopimelate (m-DAP or DL-DAP), required for both lysine and peptidoglycan biosynthesis. Catalyzes the direct conversion of tetrahydrodipicolinate to LL-diaminopimelate. This chain is LL-diaminopimelate aminotransferase, found in Picosynechococcus sp. (strain ATCC 27264 / PCC 7002 / PR-6) (Agmenellum quadruplicatum).